Consider the following 158-residue polypeptide: Globin CTT-I/CTT-IA (158 aa).

Residues 1 to 15 (MKFLILALCVAAAMA) form the signal peptide. One can recognise a Globin domain in the interval 16 to 158 (GPSGDQIAAA…FVFSTLKNEL (143 aa)). Residues histidine 74 and histidine 109 each contribute to the heme b site.

Belongs to the globin family. As to quaternary structure, monomer.

This Chironomus thummi thummi (Midge) protein is Globin CTT-I/CTT-IA (CTT-1).